The primary structure comprises 429 residues: Ribosomal RNA small subunit methyltransferase B (429 aa).

Residues cysteine 254 to lysine 260, aspartate 277, aspartate 303, and aspartate 322 each bind S-adenosyl-L-methionine. Cysteine 375 serves as the catalytic Nucleophile.

This sequence belongs to the class I-like SAM-binding methyltransferase superfamily. RsmB/NOP family.

Its subcellular location is the cytoplasm. The catalysed reaction is cytidine(967) in 16S rRNA + S-adenosyl-L-methionine = 5-methylcytidine(967) in 16S rRNA + S-adenosyl-L-homocysteine + H(+). Specifically methylates the cytosine at position 967 (m5C967) of 16S rRNA. The chain is Ribosomal RNA small subunit methyltransferase B from Photorhabdus laumondii subsp. laumondii (strain DSM 15139 / CIP 105565 / TT01) (Photorhabdus luminescens subsp. laumondii).